Consider the following 342-residue polypeptide: Protein-ribulosamine 3-kinase, chloroplastic (342 aa).

The transit peptide at 1–46 directs the protein to the chloroplast; the sequence is MANVALLSAASPSTSSAAPRLRHVARRRPSRRSACPRSAASRLSIM. Residue 141-143 participates in ATP binding; that stretch reads EFI. Aspartate 246 serves as the catalytic Proton acceptor.

This sequence belongs to the fructosamine kinase family.

Its subcellular location is the plastid. It localises to the chloroplast. The catalysed reaction is N(6)-D-ribulosyl-L-lysyl-[protein] + ATP = N(6)-(3-O-phospho-D-ribulosyl)-L-lysyl-[protein] + ADP + H(+). It catalyses the reaction N(6)-(D-erythrulosyl)-L-lysyl-[protein] + ATP = N(6)-(3-O-phospho-D-erythrulosyl)-L-lysyl-[protein] + ADP + H(+). Initiates a process leading to the deglycation of proteins. Phosphorylates low-molecular-mass and protein-bound erythrulosamines and ribulosamines, but not fructosamines or psicosamines, on the third carbon of the sugar moiety. Protein-bound erythrulosamine 3-phosphates and ribulosamine 3-phosphates are unstable and decompose under physiological conditions. This chain is Protein-ribulosamine 3-kinase, chloroplastic, found in Oryza sativa subsp. indica (Rice).